The following is a 151-amino-acid chain: UPF0178 protein ESA_02916 (151 aa).

The protein belongs to the UPF0178 family.

This chain is UPF0178 protein ESA_02916, found in Cronobacter sakazakii (strain ATCC BAA-894) (Enterobacter sakazakii).